Consider the following 87-residue polypeptide: Defensin-like protein 81 (87 aa).

Residues 1 to 27 form the signal peptide; sequence MTIKKFLPLLLSSLMVYSLILLPIISG. 4 disulfide bridges follow: Cys33/Cys69, Cys37/Cys57, Cys43/Cys67, and Cys47/Cys68.

The protein belongs to the DEFL family.

It localises to the secreted. The polypeptide is Defensin-like protein 81 (Arabidopsis thaliana (Mouse-ear cress)).